Reading from the N-terminus, the 194-residue chain is Probable GTP-binding protein EngB (194 aa).

An EngB-type G domain is found at 23–194 (DKMEFAFVGR…LNFMEEKLNN (172 aa)). GTP-binding positions include 31-38 (GRSNVGKS), 58-62 (GRTQL), 76-79 (DLPG), 142-145 (TKID), and 173-175 (HSS). Mg(2+) contacts are provided by S38 and T60.

Belongs to the TRAFAC class TrmE-Era-EngA-EngB-Septin-like GTPase superfamily. EngB GTPase family. Requires Mg(2+) as cofactor.

Functionally, necessary for normal cell division and for the maintenance of normal septation. The sequence is that of Probable GTP-binding protein EngB from Fusobacterium nucleatum subsp. nucleatum (strain ATCC 25586 / DSM 15643 / BCRC 10681 / CIP 101130 / JCM 8532 / KCTC 2640 / LMG 13131 / VPI 4355).